The chain runs to 139 residues: Acidic phospholipase A2 BpPLA2-TXI (139 aa).

The signal sequence occupies residues 1–16 (MRTLWIMAVLLVGVEG). A disulfide bridge links C44 with C60. Positions 45 and 47 each coordinate Ca(2+). H63 is an active-site residue. A Ca(2+)-binding site is contributed by D64. Intrachain disulfides connect C65–C139, C73–C97, and C91–C102.

This sequence belongs to the phospholipase A2 family. Group II subfamily. D49 sub-subfamily. The cofactor is Ca(2+). In terms of tissue distribution, expressed by the venom gland.

It is found in the secreted. It catalyses the reaction a 1,2-diacyl-sn-glycero-3-phosphocholine + H2O = a 1-acyl-sn-glycero-3-phosphocholine + a fatty acid + H(+). In terms of biological role, PLA2 catalyzes the calcium-dependent hydrolysis of the 2-acyl groups in 3-sn-phosphoglycerides. The polypeptide is Acidic phospholipase A2 BpPLA2-TXI (Bothrops pauloensis (Neuwied's lancehead)).